The following is a 736-amino-acid chain: ATP-dependent zinc metalloprotease FtsH (736 aa).

2 disordered regions span residues 1-39 (MDSN…GQQR) and 57-83 (QQTQ…RKKM). The Cytoplasmic portion of the chain corresponds to 1–87 (MDSNVDSQRV…ADRKKMPPGK (87 aa)). Residues 57 to 73 (QQTQNRTGFASADTKQG) are compositionally biased toward polar residues. Residues 88–108 (AWLWFVLILIVNFLMVRLLIP) traverse the membrane as a helical segment. The Periplasmic portion of the chain corresponds to 109–205 (DAEQPVMVPY…KPIHEERSPW (97 aa)). A helical transmembrane segment spans residues 206 to 226 (ATIVYSFGPGLLFIAFYIWLF). At 227 to 736 (RRMAQQGGLG…VSLPGVAGPS (510 aa)) the chain is on the cytoplasmic side. 301–308 (GAPGTGKT) is a binding site for ATP. Residue H522 coordinates Zn(2+). E523 is an active-site residue. H526 and D598 together coordinate Zn(2+). The tract at residues 706–736 (PALDAGKLPVPDGGDKNAEPSVSLPGVAGPS) is disordered.

This sequence in the central section; belongs to the AAA ATPase family. In the C-terminal section; belongs to the peptidase M41 family. In terms of assembly, homohexamer. It depends on Zn(2+) as a cofactor.

The protein localises to the cell inner membrane. Functionally, acts as a processive, ATP-dependent zinc metallopeptidase for both cytoplasmic and membrane proteins. Plays a role in the quality control of integral membrane proteins. The protein is ATP-dependent zinc metalloprotease FtsH of Syntrophus aciditrophicus (strain SB).